Consider the following 396-residue polypeptide: MVDFGALPPEINSARMYAGPGSASLVAAAKMWDSVASDLFSAASAFQSVVWGLTTGSWIGSSAGLMVAAASPYVAWMSVTAGQAELTAAQVRVAAAAYETAYGLTVPPPVIAENRAELMILIATNLLGQNTPAIAVNEAEYGEMWAQDAAAMFGYAATAATATEALLPFEDAPLITNPGGLLEQAVAVEEAIDTAAANQLMNNVPQALQQLAQPTKSIWPFDQLSELWKAISPHLSPLSNIVSMLNNHVSMTNSGVSMASTLHSMLKGFAPAAAQAVETAAQNGVQAMSSLGSQLGSSLGSSGLGAGVAANLGRAASVGSLSVPQAWAAANQAVTPAARALPLTSLTSAAQTAPGHMLGGLPLGQLTNSGGGFGGVSNALRMPPRAYVMPRVPAAG.

It belongs to the mycobacterial PPE family.

This is an uncharacterized protein from Mycobacterium tuberculosis (strain ATCC 25618 / H37Rv).